Consider the following 258-residue polypeptide: Very-long-chain aldehyde decarbonylase GL1-9 (258 aa).

A run of 5 helical transmembrane segments spans residues 13-33 (MGTFAPIALYWVYAGGYQLVL), 63-83 (GVLLQQLVQAIVAMILFMVTS), 88-108 (VVVQPPIIIQAFQFLVAMLVM), 149-169 (PLEGLLLDTVGGAISFLVSGM), and 175-195 (VFFFCFAVLKTVDDHCGLWLP). Residues 101 to 237 (FLVAMLVMDS…FSIWDRILGT (137 aa)) form the Fatty acid hydroxylase domain.

It belongs to the sterol desaturase family. In terms of assembly, homodimer.

The protein localises to the endoplasmic reticulum membrane. It carries out the reaction a long-chain fatty aldehyde + 2 NADPH + O2 + H(+) = a long-chain alkane + formate + 2 NADP(+) + H2O. Its function is as follows. Aldehyde decarbonylase involved in the conversion of aldehydes to alkanes. Core component of a very-long-chain alkane synthesis complex. This Oryza sativa subsp. indica (Rice) protein is Very-long-chain aldehyde decarbonylase GL1-9.